We begin with the raw amino-acid sequence, 275 residues long: Large ribosomal subunit protein uL2 (275 aa).

Residues 224-251 (VMNPVDHPHGGGEGRSPIGRKAPVTPWG) form a disordered region.

Belongs to the universal ribosomal protein uL2 family. In terms of assembly, part of the 50S ribosomal subunit. Forms a bridge to the 30S subunit in the 70S ribosome.

One of the primary rRNA binding proteins. Required for association of the 30S and 50S subunits to form the 70S ribosome, for tRNA binding and peptide bond formation. It has been suggested to have peptidyltransferase activity; this is somewhat controversial. Makes several contacts with the 16S rRNA in the 70S ribosome. In Heliobacterium modesticaldum (strain ATCC 51547 / Ice1), this protein is Large ribosomal subunit protein uL2.